Reading from the N-terminus, the 134-residue chain is Large ribosomal subunit protein mL41 (134 aa).

A mitochondrion-targeting transit peptide spans 1–13 (MGFLTAVTQGLVR).

Belongs to the mitochondrion-specific ribosomal protein mL41 family. As to quaternary structure, component of the mitochondrial ribosome large subunit (39S) which comprises a 16S rRNA and about 50 distinct proteins. Interacts with BCL2. Was also identified in the 28S mitochondrial ribosome.

It localises to the mitochondrion. Component of the mitochondrial ribosome large subunit. Also involved in apoptosis and cell cycle. Enhances p53/TP53 stability, thereby contributing to p53/TP53-induced apoptosis in response to growth-inhibitory condition. Enhances p53/TP53 translocation to the mitochondria. Has the ability to arrest the cell cycle at the G1 phase, possibly by stabilizing the CDKN1A and CDKN1B (p27Kip1) proteins. This chain is Large ribosomal subunit protein mL41 (Mrpl41), found in Rattus norvegicus (Rat).